A 410-amino-acid chain; its full sequence is Acetate kinase (410 aa).

Asn7 is a binding site for Mg(2+). Residue Lys14 participates in ATP binding. Residue Arg98 participates in substrate binding. Residue Asp155 is the Proton donor/acceptor of the active site. Residues 215-219 (HLGNG), 290-292 (DMR), and 338-342 (GIGEN) each bind ATP. Residue Glu392 coordinates Mg(2+).

This sequence belongs to the acetokinase family. Homodimer. The cofactor is Mg(2+). Requires Mn(2+) as cofactor.

Its subcellular location is the cytoplasm. The enzyme catalyses acetate + ATP = acetyl phosphate + ADP. It participates in metabolic intermediate biosynthesis; acetyl-CoA biosynthesis; acetyl-CoA from acetate: step 1/2. Functionally, catalyzes the formation of acetyl phosphate from acetate and ATP. Can also catalyze the reverse reaction. This is Acetate kinase from Kocuria rhizophila (strain ATCC 9341 / DSM 348 / NBRC 103217 / DC2201).